Consider the following 140-residue polypeptide: Complex III assembly factor LYRM7 (140 aa).

Positions 93–140 (QYEFVNDQPPQRKKRGKIQIDDEQPTTCCGGGCGKPMPSNNSEKSTCS) are disordered. Positions 130–140 (PSNNSEKSTCS) are enriched in polar residues.

It belongs to the complex I LYR family. Interacts with UQCRFS1.

It is found in the mitochondrion matrix. In terms of biological role, assembly factor required for Rieske Fe-S protein UQCRFS1 incorporation into the cytochrome b-c1 (CIII) complex. Functions as a chaperone, binding to this subunit within the mitochondrial matrix and stabilizing it prior to its translocation and insertion into the late CIII dimeric intermediate within the mitochondrial inner membrane. This is Complex III assembly factor LYRM7 (lyrm7) from Dictyostelium discoideum (Social amoeba).